The primary structure comprises 161 residues: Protein PLASTID TRANSCRIPTIONALLY ACTIVE 7 (161 aa).

Residues 1-32 (MASFTCSSPSSILPIIDTRSGNLRCTFQSQVS) constitute a chloroplast transit peptide.

As to quaternary structure, component of the transcriptionally active chromosome (TAC) complexes. Interacts with FLN1, PTAC10, PTAC12/HMR/PAP5 and PTAC14. Binds to SL1/MTERF3. As to expression, mostly expressed in leaves, flowers and seedlings, and, to a lower extent, in roots and stems.

The protein resides in the plastid. Its subcellular location is the chloroplast. Essential for chloroplast development, especially for thylakoid formation. Involved in plastid gene expression, probably by maintaining plastid-encoded RNA polymerase (PEP) activity. The protein is Protein PLASTID TRANSCRIPTIONALLY ACTIVE 7 of Arabidopsis thaliana (Mouse-ear cress).